We begin with the raw amino-acid sequence, 356 residues long: MAGVACLGKAADADEWCDSGLGSLGPDAAAPGGPGLGAELGPGLSWAPLVFGYVTEDGDTALHLAVIHQHEPFLDFLLGFSAGTEYMDLQNDLGQTALHLAAILGETSTVEKLYAAGAGLCVAERRGHTALHLACRVGAHACARALLQPRPRRPREAPDTYLAQGPDRTPDTNHTPVALYPDSDLEKEEEESEEDWKLQLEAENYEGHTPLHVAVIHKDVEMVRLLRDAGADLDKPEPTCGRSPLHLAVEAQAADVLELLLRAGANPAARMYGGRTPLGSAMLRPNPILARLLRAHGAPEPEGEDEKSGPCSSSSDSDSGDEGDEYDDIVVHSSRSQTRLPPTPASKPLPDDPRPV.

Residues Ser-19 and Ser-23 each carry the phosphoserine; by RPS6KA1 modification. ANK repeat units lie at residues 57-86, 93-122, and 126-155; these read DGDTALHLAVIHQHEPFLDFLLGFSAGTEY, LGQTALHLAAILGETSTVEKLYAAGAGLCV, and RGHTALHLACRVGAHACARALLQPRPRRPR. The segment at 149 to 193 is disordered; it reads PRPRRPREAPDTYLAQGPDRTPDTNHTPVALYPDSDLEKEEEESE. Phosphoserine is present on Ser-183. Over residues 183–193 the composition is skewed to acidic residues; sequence SDLEKEEEESE. 3 ANK repeats span residues 206-235, 240-269, and 273-302; these read EGHTPLHVAVIHKDVEMVRLLRDAGADLDK, CGRSPLHLAVEAQAADVLELLLRAGANPAA, and GGRTPLGSAMLRPNPILARLLRAHGAPEPE. The disordered stretch occupies residues 298–356; sequence APEPEGEDEKSGPCSSSSDSDSGDEGDEYDDIVVHSSRSQTRLPPTPASKPLPDDPRPV. 2 positions are modified to phosphoserine; by CK2: Ser-313 and Ser-315. Residues 318–328 show a composition bias toward acidic residues; it reads DSGDEGDEYDD.

The protein belongs to the NF-kappa-B inhibitor family. As to quaternary structure, interacts with THRB (via ligand-binding domain). Interacts with RELA and REL. Interacts with COMMD1. Interacts with inhibitor kappa B-interacting Ras-like NKIRAS1 and NKIRAS2. In terms of processing, phosphorylated by RPS6KA1; followed by degradation. Interaction with NKIRAS1 and NKIRAS2 probably prevents phosphorylation. Expressed in all tissues examined.

Its subcellular location is the cytoplasm. It localises to the nucleus. Functionally, inhibits NF-kappa-B by complexing with and trapping it in the cytoplasm. However, the unphosphorylated form resynthesized after cell stimulation is able to bind NF-kappa-B allowing its transport to the nucleus and protecting it to further NFKBIA-dependent inactivation. Association with inhibitor kappa B-interacting NKIRAS1 and NKIRAS2 prevent its phosphorylation rendering it more resistant to degradation, explaining its slower degradation. The chain is NF-kappa-B inhibitor beta (NFKBIB) from Homo sapiens (Human).